The sequence spans 170 residues: Ribosome maturation factor RimM (170 aa).

The PRC barrel domain maps to 97-170 (HPDEYYWVDL…RIVVDWDPEF (74 aa)).

The protein belongs to the RimM family. As to quaternary structure, binds ribosomal protein uS19.

The protein resides in the cytoplasm. In terms of biological role, an accessory protein needed during the final step in the assembly of 30S ribosomal subunit, possibly for assembly of the head region. Essential for efficient processing of 16S rRNA. May be needed both before and after RbfA during the maturation of 16S rRNA. It has affinity for free ribosomal 30S subunits but not for 70S ribosomes. This is Ribosome maturation factor RimM from Xylella fastidiosa (strain M12).